We begin with the raw amino-acid sequence, 413 residues long: GTPase HflX (413 aa).

The Hflx-type G domain maps to 200–386; the sequence is VRVALVGYTN…KVYETVREIH (187 aa). GTP is bound by residues 206 to 213, 231 to 235, 252 to 255, 318 to 321, and 364 to 366; these read GYTNVGKS, FATLD, DTVG, NKID, and SAT. Residues serine 213 and threonine 233 each coordinate Mg(2+).

The protein belongs to the TRAFAC class OBG-HflX-like GTPase superfamily. HflX GTPase family. In terms of assembly, monomer. Associates with the 50S ribosomal subunit. It depends on Mg(2+) as a cofactor.

It is found in the cytoplasm. GTPase that associates with the 50S ribosomal subunit and may have a role during protein synthesis or ribosome biogenesis. The protein is GTPase HflX of Flavobacterium psychrophilum (strain ATCC 49511 / DSM 21280 / CIP 103535 / JIP02/86).